Reading from the N-terminus, the 178-residue chain is Cell division protein ZapC (178 aa).

The protein belongs to the ZapC family. As to quaternary structure, interacts directly with FtsZ.

It is found in the cytoplasm. Its function is as follows. Contributes to the efficiency of the cell division process by stabilizing the polymeric form of the cell division protein FtsZ. Acts by promoting interactions between FtsZ protofilaments and suppressing the GTPase activity of FtsZ. In Aeromonas hydrophila subsp. hydrophila (strain ATCC 7966 / DSM 30187 / BCRC 13018 / CCUG 14551 / JCM 1027 / KCTC 2358 / NCIMB 9240 / NCTC 8049), this protein is Cell division protein ZapC.